The following is a 394-amino-acid chain: MNKKSIRDVDLKGKRVFCRVDFNVPMKEGKITDETRIRAALPTIQYLVEQGAKVILASHLGRPKGQVVEEMRLTPVAARLGELLGKDVKKADEAFGPVAQEMVAAMNEGDVLVLENVRFYAGEEKNDAELAKEFAALADIFVNDAFGAAHRAHASTAGIADYLPAVSGLLMEKELDVLGKALSNPERPFTAIIGGAKVKDKIGVIRHLLDKVDNLIIGGGLAYTFVKALGHEIGLSLCEDDKIELAKEFMQLAKEKGVNFYMPVDVVITEEFSETATTKIVGIDSIPSNWEGVDIGPKTREIYADVIKNSKLVVWNGPMGVFEMTPFAEGTKAVGQALADAEDTYSVIGGGDSAAAVEKFGMADKMSHISTGGGASLEFMEGKELPGVVCLNDK.

Substrate contacts are provided by residues 21 to 23, Arg36, 59 to 62, Arg118, and Arg151; these read DFN and HLGR. Phosphoserine is present on Ser183. Residues Lys201 and Gly292 each coordinate ATP. Phosphothreonine is present on Thr299. ATP-binding positions include Glu323 and 350 to 353; that span reads GGDS.

The protein belongs to the phosphoglycerate kinase family. In terms of assembly, monomer.

Its subcellular location is the cytoplasm. It carries out the reaction (2R)-3-phosphoglycerate + ATP = (2R)-3-phospho-glyceroyl phosphate + ADP. It participates in carbohydrate degradation; glycolysis; pyruvate from D-glyceraldehyde 3-phosphate: step 2/5. The chain is Phosphoglycerate kinase from Bacillus cereus (strain B4264).